The following is a 256-amino-acid chain: Adenosine 5'-phosphosulfate reductase (256 aa).

[4Fe-4S] cluster is bound by residues C120, C121, C203, and C206. C231 (nucleophile; cysteine thiosulfonate intermediate) is an active-site residue.

Belongs to the PAPS reductase family. CysH subfamily. It depends on [4Fe-4S] cluster as a cofactor.

It localises to the cytoplasm. The catalysed reaction is [thioredoxin]-disulfide + sulfite + AMP + 2 H(+) = adenosine 5'-phosphosulfate + [thioredoxin]-dithiol. It participates in sulfur metabolism; hydrogen sulfide biosynthesis; sulfite from sulfate. In terms of biological role, catalyzes the formation of sulfite from adenosine 5'-phosphosulfate (APS) using thioredoxin as an electron donor. The polypeptide is Adenosine 5'-phosphosulfate reductase (Allochromatium vinosum (strain ATCC 17899 / DSM 180 / NBRC 103801 / NCIMB 10441 / D) (Chromatium vinosum)).